Reading from the N-terminus, the 160-residue chain is ATP synthase subunit delta, mitochondrial (160 aa).

The N-terminal 22 residues, 1–22 (MLRSIIGKSASRSLNFVAKRSY), are a transit peptide targeting the mitochondrion.

It belongs to the ATPase epsilon chain family. F-type ATPases have 2 components, CF(1) - the catalytic core - and CF(0) - the membrane proton channel. CF(1) has five subunits: alpha(3), beta(3), gamma(1), delta(1), epsilon(1). CF(0) has three main subunits: a, b and c.

Its subcellular location is the mitochondrion. The protein localises to the mitochondrion inner membrane. In terms of biological role, mitochondrial membrane ATP synthase (F(1)F(0) ATP synthase or Complex V) produces ATP from ADP in the presence of a proton gradient across the membrane which is generated by electron transport complexes of the respiratory chain. F-type ATPases consist of two structural domains, F(1) - containing the extramembraneous catalytic core, and F(0) - containing the membrane proton channel, linked together by a central stalk and a peripheral stalk. During catalysis, ATP turnover in the catalytic domain of F(1) is coupled via a rotary mechanism of the central stalk subunits to proton translocation. Part of the complex F(1) domain and of the central stalk which is part of the complex rotary element. Rotation of the central stalk against the surrounding alpha(3)beta(3) subunits leads to hydrolysis of ATP in three separate catalytic sites on the beta subunits. This is ATP synthase subunit delta, mitochondrial (ATP16) from Saccharomyces cerevisiae (strain ATCC 204508 / S288c) (Baker's yeast).